The following is a 163-amino-acid chain: Small ribosomal subunit protein uS5 (163 aa).

The region spanning 8 to 71 (LIEKIVDLNR…ERAKKGMVQV (64 aa)) is the S5 DRBM domain.

It belongs to the universal ribosomal protein uS5 family. In terms of assembly, part of the 30S ribosomal subunit. Contacts proteins S4 and S8.

Functionally, with S4 and S12 plays an important role in translational accuracy. Its function is as follows. Located at the back of the 30S subunit body where it stabilizes the conformation of the head with respect to the body. This chain is Small ribosomal subunit protein uS5, found in Oleidesulfovibrio alaskensis (strain ATCC BAA-1058 / DSM 17464 / G20) (Desulfovibrio alaskensis).